We begin with the raw amino-acid sequence, 75 residues long: Large ribosomal subunit protein uL29 (75 aa).

It belongs to the universal ribosomal protein uL29 family.

In Ureaplasma urealyticum serovar 10 (strain ATCC 33699 / Western), this protein is Large ribosomal subunit protein uL29.